The following is a 263-amino-acid chain: Phosphatidylglycerol--prolipoprotein diacylglyceryl transferase (263 aa).

Helical transmembrane passes span 15–35 (ISIH…VYLA), 52–72 (FILL…VIFQ), 83–103 (IFAI…GAAV), and 112–132 (AIAV…AQSI). Arginine 134 is a binding site for a 1,2-diacyl-sn-glycero-3-phospho-(1'-sn-glycerol). The next 3 membrane-spanning stretches (helical) occupy residues 170-190 (VPTF…ILGL), 200-220 (GDVT…IEGM), and 227-247 (FVGL…GAVL).

The protein belongs to the Lgt family.

It is found in the cell membrane. The catalysed reaction is L-cysteinyl-[prolipoprotein] + a 1,2-diacyl-sn-glycero-3-phospho-(1'-sn-glycerol) = an S-1,2-diacyl-sn-glyceryl-L-cysteinyl-[prolipoprotein] + sn-glycerol 1-phosphate + H(+). The protein operates within protein modification; lipoprotein biosynthesis (diacylglyceryl transfer). Functionally, catalyzes the transfer of the diacylglyceryl group from phosphatidylglycerol to the sulfhydryl group of the N-terminal cysteine of a prolipoprotein, the first step in the formation of mature lipoproteins. This Streptococcus thermophilus (strain CNRZ 1066) protein is Phosphatidylglycerol--prolipoprotein diacylglyceryl transferase.